We begin with the raw amino-acid sequence, 63 residues long: Putative flagellar calcium-binding protein (63 aa).

Positions 1 to 11 (MGCISSKSTQT) are enriched in polar residues. Positions 1–23 (MGCISSKSTQTGKKEGKTAAERK) are disordered. Basic and acidic residues predominate over residues 12 to 23 (GKKEGKTAAERK). The EF-hand domain maps to 40–63 (EDKARRIELFKKFDKNNTGKLSME). Residues D53, N55, T57, and K59 each coordinate Ca(2+).

The protein belongs to the calflagin family.

The protein resides in the cell projection. Its subcellular location is the cilium. The protein localises to the flagellum. In Crithidia fasciculata, this protein is Putative flagellar calcium-binding protein (CABP).